Reading from the N-terminus, the 206-residue chain is Acireductone dioxygenase (206 aa).

Fe(2+) is bound by residues His102, His104, Glu108, and His146. His102, His104, Glu108, and His146 together coordinate Ni(2+).

The protein belongs to the acireductone dioxygenase (ARD) family. As to quaternary structure, monomer. The cofactor is Fe(2+). Ni(2+) serves as cofactor.

It catalyses the reaction 1,2-dihydroxy-5-(methylsulfanyl)pent-1-en-3-one + O2 = 3-(methylsulfanyl)propanoate + CO + formate + 2 H(+). The enzyme catalyses 1,2-dihydroxy-5-(methylsulfanyl)pent-1-en-3-one + O2 = 4-methylsulfanyl-2-oxobutanoate + formate + 2 H(+). It participates in amino-acid biosynthesis; L-methionine biosynthesis via salvage pathway; L-methionine from S-methyl-5-thio-alpha-D-ribose 1-phosphate: step 5/6. In terms of biological role, catalyzes 2 different reactions between oxygen and the acireductone 1,2-dihydroxy-3-keto-5-methylthiopentene (DHK-MTPene) depending upon the metal bound in the active site. Fe-containing acireductone dioxygenase (Fe-ARD) produces formate and 2-keto-4-methylthiobutyrate (KMTB), the alpha-ketoacid precursor of methionine in the methionine recycle pathway. Ni-containing acireductone dioxygenase (Ni-ARD) produces methylthiopropionate, carbon monoxide and formate, and does not lie on the methionine recycle pathway. This chain is Acireductone dioxygenase, found in Frankia alni (strain DSM 45986 / CECT 9034 / ACN14a).